We begin with the raw amino-acid sequence, 387 residues long: 1-deoxy-D-xylulose 5-phosphate reductoisomerase (387 aa).

6 residues coordinate NADPH: threonine 10, glycine 11, serine 12, valine 13, asparagine 38, and asparagine 119. Lysine 120 contributes to the 1-deoxy-D-xylulose 5-phosphate binding site. Glutamate 121 contributes to the NADPH binding site. Mn(2+) is bound at residue aspartate 145. 1-deoxy-D-xylulose 5-phosphate is bound by residues serine 146, glutamate 147, serine 170, and histidine 193. A Mn(2+)-binding site is contributed by glutamate 147. Glycine 199 is a binding site for NADPH. Positions 206, 211, 212, and 215 each coordinate 1-deoxy-D-xylulose 5-phosphate. Residue glutamate 215 coordinates Mn(2+).

The protein belongs to the DXR family. The cofactor is Mg(2+). Mn(2+) is required as a cofactor.

The enzyme catalyses 2-C-methyl-D-erythritol 4-phosphate + NADP(+) = 1-deoxy-D-xylulose 5-phosphate + NADPH + H(+). It functions in the pathway isoprenoid biosynthesis; isopentenyl diphosphate biosynthesis via DXP pathway; isopentenyl diphosphate from 1-deoxy-D-xylulose 5-phosphate: step 1/6. Its function is as follows. Catalyzes the NADPH-dependent rearrangement and reduction of 1-deoxy-D-xylulose-5-phosphate (DXP) to 2-C-methyl-D-erythritol 4-phosphate (MEP). This chain is 1-deoxy-D-xylulose 5-phosphate reductoisomerase, found in Wolbachia sp. subsp. Drosophila simulans (strain wRi).